Reading from the N-terminus, the 765-residue chain is LPS-assembly protein LptD (765 aa).

A signal peptide spans 1-18 (MQIRYLLALSLLPKLVLA).

It belongs to the LptD family. In terms of assembly, component of the lipopolysaccharide transport and assembly complex. Interacts with LptE and LptA.

It is found in the cell outer membrane. Functionally, together with LptE, is involved in the assembly of lipopolysaccharide (LPS) at the surface of the outer membrane. The sequence is that of LPS-assembly protein LptD from Shewanella oneidensis (strain ATCC 700550 / JCM 31522 / CIP 106686 / LMG 19005 / NCIMB 14063 / MR-1).